Reading from the N-terminus, the 427-residue chain is 3-phosphoshikimate 1-carboxyvinyltransferase (427 aa).

Residues K20, S21, and R25 each contribute to the 3-phosphoshikimate site. Residue K20 coordinates phosphoenolpyruvate. Positions 92 and 120 each coordinate phosphoenolpyruvate. Residues S166, Q168, D312, and K339 each coordinate 3-phosphoshikimate. Phosphoenolpyruvate is bound at residue Q168. D312 (proton acceptor) is an active-site residue. Phosphoenolpyruvate contacts are provided by R343 and R385.

The protein belongs to the EPSP synthase family. In terms of assembly, monomer.

The protein resides in the cytoplasm. The enzyme catalyses 3-phosphoshikimate + phosphoenolpyruvate = 5-O-(1-carboxyvinyl)-3-phosphoshikimate + phosphate. It participates in metabolic intermediate biosynthesis; chorismate biosynthesis; chorismate from D-erythrose 4-phosphate and phosphoenolpyruvate: step 6/7. Catalyzes the transfer of the enolpyruvyl moiety of phosphoenolpyruvate (PEP) to the 5-hydroxyl of shikimate-3-phosphate (S3P) to produce enolpyruvyl shikimate-3-phosphate and inorganic phosphate. The polypeptide is 3-phosphoshikimate 1-carboxyvinyltransferase (Streptococcus equi subsp. zooepidemicus (strain H70)).